Consider the following 159-residue polypeptide: Globin-like protein (159 aa).

The region spanning 1–152 is the Globin domain; it reads MSMNRQEISD…FNAESQTHLK (152 aa). Residue His-101 participates in heme binding.

This sequence belongs to the globin family. In terms of assembly, homodimer. In terms of tissue distribution, expressed mainly in a subset of neuronal cells and in head muscular tissue.

Its subcellular location is the cytoplasm. In terms of biological role, may be a globin and may play a role in oxygen transport. In Caenorhabditis elegans, this protein is Globin-like protein (glb-1).